The primary structure comprises 617 residues: Lipoteichoic acid synthase-like YvgJ (617 aa).

Topologically, residues 1 to 10 are cytoplasmic; it reads MKGTFFHNQR. The chain crosses the membrane as a helical span at residues 11 to 31; that stretch reads FLCFSILFMWIKTYVIYKLGF. Residues 32-41 are Extracellular-facing; the sequence is DLQIDTLLEE. The chain crosses the membrane as a helical span at residues 42–62; sequence LMLLVNPLSFILPLFGIGLFL. The Cytoplasmic portion of the chain corresponds to 63–68; the sequence is KENKQR. Residues 69–89 form a helical membrane-spanning segment; the sequence is AFLLIANLVLTVILISNTIFY. Topologically, residues 90 to 115 are extracellular; it reads GFYIDFITIPVLFQASNMSDMGSSVK. The helical transmembrane segment at 116–136 threads the bilayer; it reads ELFHPLFIALFVDLVFLLLFA. The Cytoplasmic portion of the chain corresponds to 137–153; the sequence is RKTKHPQTKAAPHTIKR. A helical membrane pass occupies residues 154–171; it reads YYAASCGMLLCTLALAEV. The Extracellular segment spans residues 172-617; the sequence is QQPKLLAHSF…LNGDLLRFSE (446 aa). The Mn(2+) site is built by E251 and T293. The active site involves T293. Residue H408 coordinates substrate. The Mn(2+) site is built by D467 and H468.

This sequence belongs to the LTA synthase family. In terms of processing, proteolytically cleaved.

It is found in the cell membrane. The protein localises to the secreted. The polypeptide is Lipoteichoic acid synthase-like YvgJ (yvgJ) (Bacillus subtilis (strain 168)).